The chain runs to 467 residues: tRNA modification GTPase MnmE (467 aa).

(6S)-5-formyl-5,6,7,8-tetrahydrofolate is bound by residues Arg-25, Glu-87, and Lys-130. Residues 226-389 (GLSVVLAGQP…LRGELLRIAG (164 aa)) enclose the TrmE-type G domain. Asn-236 contributes to the K(+) binding site. Residues 236–241 (NVGKSS), 255–261 (TPIAGTT), and 280–283 (DTAG) each bind GTP. Ser-240 lines the Mg(2+) pocket. K(+) is bound by residues Thr-255, Ile-257, and Thr-260. Thr-261 contributes to the Mg(2+) binding site. Lys-467 contributes to the (6S)-5-formyl-5,6,7,8-tetrahydrofolate binding site.

The protein belongs to the TRAFAC class TrmE-Era-EngA-EngB-Septin-like GTPase superfamily. TrmE GTPase family. In terms of assembly, homodimer. Heterotetramer of two MnmE and two MnmG subunits. The cofactor is K(+).

The protein localises to the cytoplasm. Functionally, exhibits a very high intrinsic GTPase hydrolysis rate. Involved in the addition of a carboxymethylaminomethyl (cmnm) group at the wobble position (U34) of certain tRNAs, forming tRNA-cmnm(5)s(2)U34. In Burkholderia thailandensis (strain ATCC 700388 / DSM 13276 / CCUG 48851 / CIP 106301 / E264), this protein is tRNA modification GTPase MnmE.